A 977-amino-acid chain; its full sequence is MELGPPLVLLLATVWHGQGAPVIEPSGPELVVEPGETVTLRCVSNGSVEWDGPISPYWTLDPESPGSTLTTRNATFKNTGTYRCTELEDPMAGSTTIHLYVKDPAHSWNLLAQEVTVVEGQEAVLPCLITDPALKDSVSLMREGGRQVLRKTVYFFSPWRGFIIRKAKVLDSNTYVCKTMVNGRESTSTGIWLKVNRVHPEPPQIKLEPSKLVRIRGEAAQIVCSATNAEVGFNVILKRGDTKLEIPLNSDFQDNYYKKVRALSLNAVDFQDAGIYSCVASNDVGTRTATMNFQVVESAYLNLTSEQSLLQEVSVGDSLILTVHADAYPSIQHYNWTYLGPFFEDQRKLEFITQRAIYRYTFKLFLNRVKASEAGQYFLMAQNKAGWNNLTFELTLRYPPEVSVTWMPVNGSDVLFCDVSGYPQPSVTWMECRGHTDRCDEAQALQVWNDTHPEVLSQKPFDKVIIQSQLPIGTLKHNMTYFCKTHNSVGNSSQYFRAVSLGQSKQLPDESLFTPVVVACMSVMSLLVLLLLLLLYKYKQKPKYQVRWKIIERYEGNSYTFIDPTQLPYNEKWEFPRNNLQFGKTLGAGAFGKVVEATAFGLGKEDAVLKVAVKMLKSTAHADEKEALMSELKIMSHLGQHENIVNLLGACTHGGPVLVITEYCCYGDLLNFLRRKAEAMLGPSLSPGQDSEGDSSYKNIHLEKKYVRRDSGFSSQGVDTYVEMRPVSTSSSDSFFKQDLDKEASRPLELWDLLHFSSQVAQGMAFLASKNCIHRDVAARNVLLTSGHVAKIGDFGLARDIMNDSNYVVKGNARLPVKWMAPESIFDCVYTVQSDVWSYGILLWEIFSLGLNPYPGILVNNKFYKLVKDGYQMAQPVFAPKNIYSIMQSCWDLEPTRRPTFQQICFLLQEQARLERRDQDYANLPSSGGSSGSDSGGGSSGGSSSEPEEESSSEHLACCEPGDIAQPLLQPNNYQFC.

An N-terminal signal peptide occupies residues Met1 to Gly19. At Ala20–Pro515 the chain is on the extracellular side. 5 consecutive Ig-like C2-type domains span residues Glu24–Pro104, Ser107–Arg197, Gln204–Ser298, Ala299–Arg397, and Tyr398–Gln503. 3 disulfide bridges follow: Cys42–Cys84, Cys127–Cys177, and Cys224–Cys278. N-linked (GlcNAc...) asparagine glycosylation is found at Asn45 and Asn73. N-linked (GlcNAc...) asparagine glycans are attached at residues Asn302, Asn335, Asn389, Asn410, Asn449, Asn478, and Asn491. Cysteines 417 and 483 form a disulfide. The helical transmembrane segment at Val516 to Tyr536 threads the bilayer. The Cytoplasmic segment spans residues Lys537–Cys977. A regulatory juxtamembrane domain region spans residues Gln540–Lys572. Residues Tyr544 and Tyr559 each carry the phosphotyrosine; by autocatalysis modification. Positions Leu580 to Arg913 constitute a Protein kinase domain. ATP contacts are provided by residues Leu586 to Val594 and Lys614. 2 positions are modified to phosphotyrosine; by autocatalysis: Tyr697 and Tyr706. Ser711 is modified (phosphoserine). The residue at position 721 (Tyr721) is a Phosphotyrosine; by autocatalysis. Asp776 acts as the Proton acceptor in catalysis. Residues Asp794–Pro816 form an activation loop region. Phosphotyrosine; by autocatalysis occurs at positions 807 and 921. Positions Tyr921–Ala957 are disordered. The span at Gly929–Gly941 shows a compositional bias: gly residues. Residue Tyr974 is modified to Phosphotyrosine; by autocatalysis.

The protein belongs to the protein kinase superfamily. Tyr protein kinase family. CSF-1/PDGF receptor subfamily. In terms of assembly, monomer. Homodimer. Interacts with CSF1 and IL34. Interaction with dimeric CSF1 or IL34 leads to receptor homodimerization. Interacts with INPPL1/SHIP2 and THOC5. Interacts (tyrosine phosphorylated) with PLCG2 (via SH2 domain). Interacts (tyrosine phosphorylated) with PIK3R1 (via SH2 domain). Interacts (tyrosine phosphorylated) with FYN, YES1 and SRC (via SH2 domain). Interacts (tyrosine phosphorylated) with CBL, GRB2 and SLA2. Autophosphorylated in response to CSF1 or IL34 binding. Phosphorylation at Tyr-559 is important for normal down-regulation of signaling by ubiquitination, internalization and degradation. Phosphorylation at Tyr-559 and Tyr-807 is important for interaction with SRC family members, including FYN, YES1 and SRC, and for subsequent activation of these protein kinases. Phosphorylation at Tyr-697 and Tyr-921 is important for interaction with GRB2. Phosphorylation at Tyr-721 is important for interaction with PIK3R1. Phosphorylation at Tyr-721 and Tyr-807 is important for interaction with PLCG2. Phosphorylation at Tyr-974 is important for interaction with CBL. Dephosphorylation by PTPN2 negatively regulates downstream signaling and macrophage differentiation. Post-translationally, ubiquitinated. Becomes rapidly polyubiquitinated after autophosphorylation, leading to its degradation. Widely expressed.

Its subcellular location is the cell membrane. The enzyme catalyses L-tyrosyl-[protein] + ATP = O-phospho-L-tyrosyl-[protein] + ADP + H(+). Its activity is regulated as follows. Present in an inactive conformation in the absence of bound ligand. CSF1 or IL34 binding leads to dimerization and activation by autophosphorylation on tyrosine residues. Inhibited by imatinib/STI-571 (Gleevec), dasatinib, sunitinib/SU11248, lestaurtinib/CEP-701, midostaurin/PKC-412, Ki20227, linifanib/ABT-869, Axitinib/AG013736, sorafenib/BAY 43-9006 and GW2580. In terms of biological role, tyrosine-protein kinase that acts as a cell-surface receptor for CSF1 and IL34 and plays an essential role in the regulation of survival, proliferation and differentiation of hematopoietic precursor cells, especially mononuclear phagocytes, such as macrophages and monocytes. Promotes the release of pro-inflammatory chemokines in response to IL34 and CSF1, and thereby plays an important role in innate immunity and in inflammatory processes. Plays an important role in the regulation of osteoclast proliferation and differentiation, the regulation of bone resorption, and is required for normal bone and tooth development. Required for normal male and female fertility, and for normal development of milk ducts and acinar structures in the mammary gland during pregnancy. Promotes reorganization of the actin cytoskeleton, regulates formation of membrane ruffles, cell adhesion and cell migration, and promotes cancer cell invasion. Activates several signaling pathways in response to ligand binding, including the ERK1/2 and the JNK pathway. Phosphorylates PIK3R1, PLCG2, GRB2, SLA2 and CBL. Activation of PLCG2 leads to the production of the cellular signaling molecules diacylglycerol and inositol 1,4,5-trisphosphate, that then lead to the activation of protein kinase C family members, especially PRKCD. Phosphorylation of PIK3R1, the regulatory subunit of phosphatidylinositol 3-kinase, leads to activation of the AKT1 signaling pathway. Activated CSF1R also mediates activation of the MAP kinases MAPK1/ERK2 and/or MAPK3/ERK1, and of the SRC family kinases SRC, FYN and YES1. Activated CSF1R transmits signals both via proteins that directly interact with phosphorylated tyrosine residues in its intracellular domain, or via adapter proteins, such as GRB2. Promotes activation of STAT family members STAT3, STAT5A and/or STAT5B. Promotes tyrosine phosphorylation of SHC1 and INPP5D/SHIP-1. Receptor signaling is down-regulated by protein phosphatases, such as INPP5D/SHIP-1, that dephosphorylate the receptor and its downstream effectors, and by rapid internalization of the activated receptor. In the central nervous system, may play a role in the development of microglia macrophages. The polypeptide is Macrophage colony-stimulating factor 1 receptor (Csf1r) (Mus musculus (Mouse)).